We begin with the raw amino-acid sequence, 1488 residues long: WD repeat-containing protein 7 (1488 aa).

7 WD repeats span residues 17–56 (APTH…EVNP), 62–104 (GHTA…CIEF), 156–199 (ISPD…SGLQ), 324–366 (VICP…DKQE), 404–443 (NEPL…IVQL), 462–507 (GHRN…MKHI), and 558–597 (RHLF…LDRC). 2 disordered regions span residues 761-781 (EEED…PEYR) and 911-947 (GDHM…QGQI). Basic and acidic residues predominate over residues 768 to 781 (VMRQRREESDPEYR). Ser935 carries the phosphoserine modification. Positions 937 to 947 (PASSNIVQGQI) are enriched in polar residues. WD repeat units lie at residues 1349–1388 (PAIC…CQTI) and 1390–1430 (GHKG…LGSI). Position 1454 is a phosphoserine (Ser1454).

In Rattus norvegicus (Rat), this protein is WD repeat-containing protein 7 (Wdr7).